A 1118-amino-acid chain; its full sequence is cGMP-specific 3',5'-cyclic phosphodiesterase (1118 aa).

Residues 1-142 (MTDVSSPAGG…KASTTASQQD (142 aa)) are disordered. Positions 18 to 33 (STTSSSSAATTSASSS) are enriched in low complexity. Residues 34 to 45 (KPLTNGANKTAI) show a composition bias toward polar residues. 2 stretches are compositionally biased toward low complexity: residues 46-56 (STAAGGVTPGA) and 63-72 (GAIPASSSSG). Polar residues predominate over residues 84–101 (SNNNRPAVTNRSSETKLM). Residues 102 to 128 (TPTGSSSSPSQSPSQTQASIQTQTSQQ) are compositionally biased toward low complexity. GAF domains follow at residues 247-399 (DIDV…GIGI) and 431-612 (NLEC…GLGI). Residues 642–965 (SQDQTEKLTQ…RNWQDLAEKV (324 aa)) enclose the PDEase domain. Catalysis depends on His-718, which acts as the Proton donor. A divalent metal cation is bound by residues His-722, His-758, Asp-759, and Asp-869. Disordered stretches follow at residues 1006–1035 (QQSQ…TGAL) and 1065–1118 (SHVS…CALL). 2 stretches are compositionally biased toward basic and acidic residues: residues 1011–1022 (GSEDSHTPEHQR) and 1065–1075 (SHVSEDMDDKS). Residues 1084 to 1104 (ASGSMGRMSASSSTSSAGGQM) show a composition bias toward low complexity. A compositionally biased stretch (basic residues) spans 1108-1118 (SKKRSKLCALL). At Cys-1115 the chain carries Cysteine methyl ester. Residue Cys-1115 is the site of S-farnesyl cysteine attachment. Residues 1116 to 1118 (ALL) constitute a propeptide, removed in mature form.

This sequence belongs to the cyclic nucleotide phosphodiesterase family. Interacts with PrBP. A divalent metal cation is required as a cofactor. As to expression, expressed in Malpighian tubule principal cells. Also expressed in adult head.

It localises to the cell membrane. The enzyme catalyses 3',5'-cyclic GMP + H2O = GMP + H(+). With respect to regulation, inhibited by sildenafil and zaprinast. Hydrolyzes the second messenger cGMP, which is a key regulator of many important physiological processes. Has cAMP phosphodiesterase activity in vitro but not in vivo. Has a role regulating cGMP transport in Malpighian tubule principal cells. The protein is cGMP-specific 3',5'-cyclic phosphodiesterase (Pde6) of Drosophila melanogaster (Fruit fly).